A 910-amino-acid chain; its full sequence is Periodic tryptophan protein 2 homolog (910 aa).

WD repeat units lie at residues 12 to 50, 53 to 92, 94 to 134, 144 to 183, 188 to 227, 271 to 310, 313 to 355, 358 to 397, 400 to 439, 443 to 485, 486 to 523, 525 to 563, 586 to 625, and 688 to 728; these read GTVY…SKTL, DCNY…KIYT, RSNK…KVYN, LSSD…NLFI, SHKG…GELV, GKSV…LVHN, VSEM…YVMK, AHSL…CTVT, EHTS…NFRT, PEPT…DILS, GHES…AETV, VSHE…NLGS, AKTK…ILKK, and RPEV…DPFQ. The interval 867–910 is disordered; it reads SKKSVKKEEEEEEDVSDESDDEDIEDESAGSDDEDSDDSVEIIE. The segment covering 875–910 has biased composition (acidic residues); it reads EEEEEDVSDESDDEDIEDESAGSDDEDSDDSVEIIE.

It belongs to the WD repeat PWP2 family.

This chain is Periodic tryptophan protein 2 homolog, found in Caenorhabditis elegans.